Consider the following 183-residue polypeptide: MKIYVIYNYGQYNHLIHRTLRDLGVETKLVENTTPVEQLKDVDGLVIGGGPSLDRTGNCELYLKELDVPMIGICLGHQLMAKVFGGEVGKGSMGGYSEVKVRIVEDDELFEGIPREITVWASHMDEVKKLPEGFKRLAESDICKIEAMRHEKKPLYGVQWHPEVYHSQFGVELYRNFIEICKK.

One can recognise a Glutamine amidotransferase type-1 domain in the interval 2 to 183; it reads KIYVIYNYGQ…YRNFIEICKK (182 aa). Residue Cys-74 is the Nucleophile of the active site. Active-site residues include His-161 and Glu-163.

As to quaternary structure, heterodimer composed of a glutamine amidotransferase subunit (A) and a GMP-binding subunit (B).

The enzyme catalyses XMP + L-glutamine + ATP + H2O = GMP + L-glutamate + AMP + diphosphate + 2 H(+). The protein operates within purine metabolism; GMP biosynthesis; GMP from XMP (L-Gln route): step 1/1. In terms of biological role, catalyzes the synthesis of GMP from XMP. The protein is GMP synthase [glutamine-hydrolyzing] subunit A of Archaeoglobus fulgidus (strain ATCC 49558 / DSM 4304 / JCM 9628 / NBRC 100126 / VC-16).